Consider the following 201-residue polypeptide: Calcium channel flower (201 aa).

3 consecutive transmembrane segments (helical) span residues 37-57, 59-79, and 103-120; these read LGIVGAFFAILFGLWNVLSII, LSVSCLVAGIIQMIAGFVVMA, and PMYFRAGLYCALAVPPIF.

This sequence belongs to the calcium channel flower family. Homomultimer. Associates with the dally/ magu complex.

The protein resides in the cell membrane. The protein localises to the cytoplasmic vesicle. It localises to the secretory vesicle. It is found in the synaptic vesicle membrane. Its subcellular location is the presynaptic cell membrane. The protein resides in the endosome. With respect to regulation, channel activity is inhibited by La(3+), which reduces Ca(2+) influx and thus inhibits it's function in promoting activity-dependent bulk endocytosis (ADBE) in response to high stimuli. Functionally, transmembrane protein which mediates synaptic endocytosis, fitness-based cell culling, neuronal culling, morphogen gradient scaling, and calcium transport. Regulates synaptic endocytosis and hence couples exo- with endocytosis. Controls two major modes of synaptic vesicle (SV) endocytosis in the synaptic boutons of neuromuscular junctions (NMJs); Ca(2+) channel-independent Clathrin-mediated endocytosis (CME) in response to mild stimulation, and Ca(2+) channel-dependent activity-dependent bulk endocytosis (ADBE) in response to strong stimulation. Functions in ADBE and subsequent SV reformation from bulk endosomes by initiating Ca(2+) channel-dependent phosphatidylinositol 4,5-bisphosphate (PtdIns(4,5)P2) compartmentalization in synaptic boutons. There it acts at the periactive zone to provide the low Ca(2+) levels required to initiate Calcineurin activation and upregulate PtdIns(4,5)P2. Conversely PtdIns(4,5)P2 enhances fwe Ca(2+) channel-activity, establishing a positive feedback loop that induces PtdIns(4,5)P2 microdomain at the periactive zone. These microdomains trigger bulk membrane invagination (i.e. ADBE) by triggering actin polymerization while also promoting localization of fwe to bulk endosomes, thereby removing the ADBE trigger to reduce endocytosis and prevent excess membrane uptake. PtdIns(4,5)P2 then promotes SV reformation from the bulk endosomes, to coordinate ADBE and subsequent SV reformation. Different combinations of the flower isoforms at the cell membrane are also required for the identification and elimination of suboptimal or supernumerary cells during development, regeneration, and adulthood. Required for the recognition and elimination of unfit cells in the developing wing during cell competition. In the developing pupal retina, mediates the elimination of unwanted postmitotic neurons, including supernumerary photoreceptor neurons that form at the periphery of the retina and are contained within incomplete ommatidia units. Also required for efficient elimination and replacement of old neurons by newly generated neurons during regeneration in the adult brain following mechanical injury. Downstream of the flower fitness fingerprints, cells identified as unwanted or unfit are eliminated via apoptosis through the expression of ahuizotl (azot). However, the cells marked for elimination by the flower isoforms only undergo apoptosis if additional thresholds are met; (1) their neighboring fit/healthy cells express different levels of the fwe isoforms, and (2) the levels of the protective signal SPARC expressed by the loser or unwanted cells are unable to inhibit caspase activation. These additional thresholds for flower-mediated apoptosis, allows useful cells to recover from transient and limited stress before they are unnecessarily eliminated. Functions with dally and magu in a mechanism of scaling, which utilises apoptosis to ensure that the dpp morphogen gradient, which mediates organ growth, remains proportional to the size of the growing wing. In this mechanism, fwe represses dally- and Magu-dependent activity in expanding the gradient, and dally/Magu inhibits fwe-dependent apoptosis to keep cell death rate low. When the levels of these different proteins are optimally regulated the gradient correctly scales with organ growth but when this fails, fwe-mediated apoptosis is activated to trim the developing tissue to match the correct size of the gradient. The protein is Calcium channel flower of Drosophila willistoni (Fruit fly).